The primary structure comprises 230 residues: RING finger protein 141 (230 aa).

Gly-2 carries N-myristoyl glycine lipidation. An RING-type zinc finger spans residues 155–192 (CCICMDGRADLILPCAHSFCQKCIDKWSDRHRNCPICR).

Its subcellular location is the membrane. In terms of biological role, may be involved in spermatogenesis. This chain is RING finger protein 141 (RNF141), found in Pongo abelii (Sumatran orangutan).